Here is a 173-residue protein sequence, read N- to C-terminus: Mesencephalic astrocyte-derived neurotrophic factor homolog (173 aa).

The signal sequence occupies residues 1–22; the sequence is MKTWYMVVVIGFLATLAQTSLA. Intrachain disulfides connect Cys28-Cys114, Cys31-Cys103, Cys61-Cys72, and Cys148-Cys151.

This sequence belongs to the ARMET family.

The protein localises to the secreted. In terms of biological role, required during the maturation of the embryonic nervous system for maintenance of neuronal and cuticular connectivity. Essential for maintenance of dopaminergic neurons and dopamine levels. The chain is Mesencephalic astrocyte-derived neurotrophic factor homolog from Drosophila erecta (Fruit fly).